The following is a 349-amino-acid chain: Ion-translocating oxidoreductase complex subunit D (349 aa).

4 helical membrane passes run 20–40 (IMFL…YFFG), 42–62 (GVLI…IIIL), 83–105 (VLLG…CFFA), and 120–140 (IFNP…VHMT). Position 184 is an FMN phosphoryl threonine (Thr184). 5 consecutive transmembrane segments (helical) span residues 212 to 232 (IVSI…CFLL), 236 to 256 (VICW…SSIT), 263 to 283 (FFCS…AFFI), 291 to 311 (SCTK…VWII), and 319 to 339 (DGIA…DAYL).

This sequence belongs to the NqrB/RnfD family. As to quaternary structure, the complex is composed of six subunits: RnfA, RnfB, RnfC, RnfD, RnfE and RnfG. It depends on FMN as a cofactor.

Its subcellular location is the cell inner membrane. Its function is as follows. Part of a membrane-bound complex that couples electron transfer with translocation of ions across the membrane. The sequence is that of Ion-translocating oxidoreductase complex subunit D from Buchnera aphidicola subsp. Schizaphis graminum (strain Sg).